The primary structure comprises 102 residues: uncharacterized protein (102 aa).

The interval 79–102 (AELLHPSPAPMPPATHGRSAAPCS) is disordered.

This is an uncharacterized protein from Homo sapiens (Human).